Reading from the N-terminus, the 337-residue chain is 25S rRNA (adenine(2142)-N(1))-methyltransferase (337 aa).

Residues glycine 180 and aspartate 201 each contribute to the S-adenosyl-L-methionine site.

This sequence belongs to the BMT2 family.

The protein localises to the nucleus. It is found in the nucleolus. The catalysed reaction is adenosine(2142) in 25S rRNA + S-adenosyl-L-methionine = N(1)-methyladenosine(2142) in 25S rRNA + S-adenosyl-L-homocysteine + H(+). S-adenosyl-L-methionine-dependent methyltransferase that specifically methylates the N(1) position of adenine 2142 in 25S rRNA. N(1)-methyladenine(2142) in 25S rRNA is present in helix 65, a region that accounts for most of the intersubunit surface of the large subunit. This Saccharomyces cerevisiae (strain ATCC 204508 / S288c) (Baker's yeast) protein is 25S rRNA (adenine(2142)-N(1))-methyltransferase.